The sequence spans 527 residues: Acyl-coenzyme A thioesterase 4, mitochondrial (527 aa).

The N-terminal 75 residues, 1–75 (MMTPIGIRIR…FLFDPPPIRF (75 aa)), are a transit peptide targeting the mitochondrion. HotDog ACOT-type domains follow at residues 172–294 (ILYN…RDSK) and 370–487 (KDTC…GPEA).

Belongs to the acyl coenzyme A hydrolase family. Mostly expressed at low levels in glandular trichomes (lupulin glands), and, to a lower extent, in stems, leaves, flowers and cones.

The protein localises to the mitochondrion. It carries out the reaction 2-methylpropanoyl-CoA + H2O = 2-methylpropanoate + CoA + H(+). The enzyme catalyses propanoyl-CoA + H2O = propanoate + CoA + H(+). It catalyses the reaction octanoyl-CoA + H2O = octanoate + CoA + H(+). The catalysed reaction is butanoyl-CoA + H2O = butanoate + CoA + H(+). It carries out the reaction 3-methylbutanoyl-CoA + H2O = 3-methylbutanoate + CoA + H(+). The enzyme catalyses 2-methylbutanoyl-CoA + H2O = 2-methylbutanoate + CoA + H(+). Its function is as follows. Acyl-CoA thioesterases are a group of enzymes that catalyze the hydrolysis of acyl-CoAs to the free fatty acid and coenzyme A (CoASH), providing the potential to regulate intracellular levels of acyl-CoAs, free fatty acids and CoASH. Active on acyl CoAs with short chains (propanoyl-CoA and butanoyl-CoA), branched short chains (2-methylpropanoyl-CoA, 2-methylbutanoyl-CoA and 3-methylbutanoyl-CoA) and medium chains (octanoyl-CoA). This Humulus lupulus (European hop) protein is Acyl-coenzyme A thioesterase 4, mitochondrial.